The primary structure comprises 119 residues: Hydrogenase maturation factor HypA (119 aa).

His2 provides a ligand contact to Ni(2+). Zn(2+)-binding residues include Cys73, Cys76, Cys89, and Cys92.

This sequence belongs to the HypA/HybF family.

In terms of biological role, involved in the maturation of [NiFe] hydrogenases. Required for nickel insertion into the metal center of the hydrogenase. This is Hydrogenase maturation factor HypA from Dehalococcoides mccartyi (strain ATCC BAA-2266 / KCTC 15142 / 195) (Dehalococcoides ethenogenes (strain 195)).